Reading from the N-terminus, the 384-residue chain is Bacterial ceramide synthase (384 aa).

The protein localises to the cytoplasm. It catalyses the reaction 3-oxosphinganine + a fatty acyl-CoA = N-acyl-3-oxosphinganine + CoA + H(+). The enzyme catalyses 3-oxosphinganine + tetradecanoyl-CoA = N-tetradecanoyl-3-oxosphinganine + CoA + H(+). The catalysed reaction is 3-oxosphinganine + hexadecanoyl-CoA = N-hexadecanoyl-3-oxosphinganine + CoA + H(+). It carries out the reaction 3-oxosphinganine + (9Z)-hexadecenoyl-CoA = N-(9Z-hexadecenoyl)-3-oxosphinganine + CoA + H(+). It catalyses the reaction 3-oxosphinganine + octanoyl-CoA = N-octanoyl-3-oxosphinganine + CoA + H(+). The enzyme catalyses 3-oxosphinganine + decanoyl-CoA = N-decanoyl-3-oxosphinganine + CoA + H(+). The catalysed reaction is 3-oxosphinganine + dodecanoyl-CoA = N-dodecanoyl-3-oxosphinganine + CoA + H(+). It carries out the reaction 3-oxosphinganine + octadecanoyl-CoA = N-octadecanoyl-3-oxosphinganine + CoA + H(+). It catalyses the reaction 3-oxosphinganine + eicosanoyl-CoA = N-eicosanoyl-3-oxosphinganine + CoA + H(+). The enzyme catalyses 3-oxosphinganine + docosanoyl-CoA = N-docosanoyl-3-ketodihydrosphingosine + CoA + H(+). The catalysed reaction is 3-oxosphinganine + tetracosanoyl-CoA = N-tetracosanoyl-3-oxosphinganine + CoA + H(+). It participates in lipid metabolism; sphingolipid metabolism. Its function is as follows. Involved in de novo bacterial ceramide synthesis. Catalyzes the condensation of 3-oxosphinganine with an acyl-CoA to generate oxidized ceramides. Can use acyl-CoA substrates ranging from C8 to C24, with highest in vitro activity with C14 and very little activity with acyl-CoA thioesters of 18 carbons or longer. May have a preference for monounsaturated acyl-CoA substrates, as it has a threefold greater preference for C16:1-CoA over C16:0-CoA as a substrate in vitro. In Caulobacter vibrioides (strain NA1000 / CB15N) (Caulobacter crescentus), this protein is Bacterial ceramide synthase.